A 249-amino-acid chain; its full sequence is Type-1Aa cytolytic delta-endotoxin (249 aa).

It belongs to the cyt1/cyt2 endotoxin family. Active after proteolytic processing.

Kills the larvae of dipteran insects by making pores in the epithelial cell membrane of the insect midgut. Acts on mosquitos and black flies. The protein is Type-1Aa cytolytic delta-endotoxin (cyt1Aa) of Bacillus thuringiensis subsp. morrisoni.